Here is a 1064-residue protein sequence, read N- to C-terminus: WD repeat-containing protein on Y chromosome (1064 aa).

WD repeat units lie at residues 153-197, 326-365, 369-408, 459-498, 511-550, 598-638, 746-785, and 827-866; these read EEVT…IRTA, RVPL…EPSA, GHNG…LLQT, THAA…RKII, IIDI…VVRN, FHTD…RRYS, KTGD…EAEK, and AHLK…LGTL. Positions 914 to 924 are enriched in basic and acidic residues; it reads PAKRAEVKAPE. Disordered regions lie at residues 914 to 935 and 1023 to 1064; these read PAKR…QTDD and GSAL…QQSE. Positions 925–935 are enriched in acidic residues; the sequence is DRDEETAQTDD.

The chain is WD repeat-containing protein on Y chromosome from Drosophila pseudoobscura pseudoobscura (Fruit fly).